A 171-amino-acid chain; its full sequence is Secretion monitor (171 aa).

A signal peptide spans 1-30 (MIGILNRWRQFGRRYFWPHLLLGMVAASLG).

The protein belongs to the SecM family.

It is found in the cytoplasm. The protein localises to the cytosol. Its subcellular location is the periplasm. In terms of biological role, regulates secA expression by translational coupling of the secM secA operon. Translational pausing at a specific Pro residue 5 residues before the end of the protein may allow disruption of a mRNA repressor helix that normally suppresses secA translation initiation. The chain is Secretion monitor from Pectobacterium atrosepticum (strain SCRI 1043 / ATCC BAA-672) (Erwinia carotovora subsp. atroseptica).